A 396-amino-acid polypeptide reads, in one-letter code: Exodeoxyribonuclease 7 large subunit (396 aa).

The protein belongs to the XseA family. In terms of assembly, heterooligomer composed of large and small subunits.

Its subcellular location is the cytoplasm. It catalyses the reaction Exonucleolytic cleavage in either 5'- to 3'- or 3'- to 5'-direction to yield nucleoside 5'-phosphates.. Bidirectionally degrades single-stranded DNA into large acid-insoluble oligonucleotides, which are then degraded further into small acid-soluble oligonucleotides. The protein is Exodeoxyribonuclease 7 large subunit of Clostridium tetani (strain Massachusetts / E88).